We begin with the raw amino-acid sequence, 440 residues long: Xylose isomerase (440 aa).

Residues His100 and Asp103 contribute to the active site. Mg(2+) is bound by residues Glu231, Glu267, His270, Asp295, Asp306, Asp308, and Asp338.

Belongs to the xylose isomerase family. As to quaternary structure, homotetramer. Mg(2+) serves as cofactor.

It is found in the cytoplasm. It carries out the reaction alpha-D-xylose = alpha-D-xylulofuranose. This is Xylose isomerase from Burkholderia orbicola (strain MC0-3).